Consider the following 252-residue polypeptide: Phosphoglycolate phosphatase (252 aa).

Catalysis depends on Asp-13, which acts as the Nucleophile. Mg(2+) is bound by residues Asp-13, Asp-15, and Asp-192.

Belongs to the HAD-like hydrolase superfamily. CbbY/CbbZ/Gph/YieH family. As to quaternary structure, monomer. The cofactor is Mg(2+). It depends on chloride as a cofactor.

It catalyses the reaction 2-phosphoglycolate + H2O = glycolate + phosphate. It functions in the pathway organic acid metabolism; glycolate biosynthesis; glycolate from 2-phosphoglycolate: step 1/1. Its function is as follows. Specifically catalyzes the dephosphorylation of 2-phosphoglycolate. Is involved in the dissimilation of the intracellular 2-phosphoglycolate formed during the DNA repair of 3'-phosphoglycolate ends, a major class of DNA lesions induced by oxidative stress. This Salmonella typhimurium (strain LT2 / SGSC1412 / ATCC 700720) protein is Phosphoglycolate phosphatase.